The chain runs to 716 residues: Translation initiation factor IF-2 (716 aa).

Positions F50–I137 are disordered. The span at N92 to N101 shows a compositional bias: low complexity. Residues K102 to N118 are compositionally biased toward basic residues. The span at K125–I137 shows a compositional bias: basic and acidic residues. One can recognise a tr-type G domain in the interval I217–K386. Residues G226–T233 form a G1 region. Position 226–233 (G226–T233) interacts with GTP. The segment at G251 to H255 is G2. Residues D272–G275 form a G3 region. Residues D272–H276 and N326–D329 each bind GTP. A G4 region spans residues N326–D329. The tract at residues S362–L364 is G5.

This sequence belongs to the TRAFAC class translation factor GTPase superfamily. Classic translation factor GTPase family. IF-2 subfamily.

The protein localises to the cytoplasm. Functionally, one of the essential components for the initiation of protein synthesis. Protects formylmethionyl-tRNA from spontaneous hydrolysis and promotes its binding to the 30S ribosomal subunits. Also involved in the hydrolysis of GTP during the formation of the 70S ribosomal complex. This is Translation initiation factor IF-2 from Bacillus licheniformis (strain ATCC 14580 / DSM 13 / JCM 2505 / CCUG 7422 / NBRC 12200 / NCIMB 9375 / NCTC 10341 / NRRL NRS-1264 / Gibson 46).